Consider the following 824-residue polypeptide: FT-interacting protein 1 (824 aa).

C2 domains lie at 48 to 170 (WLGL…PQWY), 217 to 341 (VRGE…SRWF), and 385 to 522 (YISD…THAY). The next 3 helical transmembrane spans lie at 625–645 (AVSL…VCHW), 657–677 (LLLI…LYMF), and 764–784 (ATCL…VTPF).

This sequence belongs to the MCTP family. As to quaternary structure, interacts with RFT1 and PI4KG4. As to expression, specifically expressed in the phloem including companion cells.

Its subcellular location is the endoplasmic reticulum membrane. Involved in the export of the long day-specific flower-promoting signal (florigen) RFT1 from the phloem companion cells to sieve elements. Promotes flowering under long days through the transport of RFT1 from the leaves to the shoot apical meristem (SAM). The chain is FT-interacting protein 1 from Oryza sativa subsp. japonica (Rice).